Here is a 917-residue protein sequence, read N- to C-terminus: Major intrinsically disordered Notch2-binding receptor 1 (917 aa).

Residues 1–892 (MEANQEASLF…AEFRRAKVCK (892 aa)) lie on the Cytoplasmic side of the membrane. 7 disordered regions span residues 337–367 (STYFGPTPVMGTQDTRRCPGRPSKQTPWPAK), 389–410 (SEEKLRYPNSGNQTPNFSGPDR), 457–476 (DKSISCTSGQHSSDTSSVGT), 568–588 (ITNGVSGSKGDKCNRPENVHH), 652–679 (SEAPSDDSASPRVFHAHSGSHGPKLENS), 706–727 (TRPSSRSLTEENSATESKIASI), and 746–783 (NEEEIKDAGPANNKDWHRKSKEADRQYDIPPQHRLPKQ). The segment covering 460–476 (ISCTSGQHSSDTSSVGT) has biased composition (polar residues). Positions 576–588 (KGDKCNRPENVHH) are enriched in basic and acidic residues. At S712 the chain carries Phosphoserine. The chain crosses the membrane as a helical span at residues 893–913 (IAALITAAACTVILVIVVPIC). Over 914-917 (TMKS) the chain is Extracellular.

Belongs to the MINAR family. Interacts with NOTCH2; this interaction increases MINAR1 stability. Interacts (via N-terminus) with DEPTOR (via PDZ domain); this interaction may stabilize DEPTOR protein by impairing its ubiquitination.

The protein resides in the cell membrane. Its function is as follows. Intrinsically disordered protein which may negatively regulate mTOR signaling pathway by stabilizing the mTOR complex component DEPTOR. Negatively regulates angiogenesis. Negatively regulates cell growth. Negatively regulates neurite outgrowth in hippocampal neurons. The protein is Major intrinsically disordered Notch2-binding receptor 1 (Minar1) of Rattus norvegicus (Rat).